Consider the following 451-residue polypeptide: tRNA modification GTPase MnmE (451 aa).

Arg-23, Glu-80, and Lys-119 together coordinate (6S)-5-formyl-5,6,7,8-tetrahydrofolate. Residues 215 to 372 form the TrmE-type G domain; sequence GIKVVLAGQP…LRAALLKTAG (158 aa). Residue Asn-225 participates in K(+) binding. GTP-binding positions include 225-230, 244-250, and 269-272; these read NVGKSS, TDIPGTT, and DTAG. Residue Ser-229 coordinates Mg(2+). Positions 244, 246, and 249 each coordinate K(+). Thr-250 contacts Mg(2+). Residue Lys-451 coordinates (6S)-5-formyl-5,6,7,8-tetrahydrofolate.

It belongs to the TRAFAC class TrmE-Era-EngA-EngB-Septin-like GTPase superfamily. TrmE GTPase family. Homodimer. Heterotetramer of two MnmE and two MnmG subunits. It depends on K(+) as a cofactor.

It localises to the cytoplasm. Its function is as follows. Exhibits a very high intrinsic GTPase hydrolysis rate. Involved in the addition of a carboxymethylaminomethyl (cmnm) group at the wobble position (U34) of certain tRNAs, forming tRNA-cmnm(5)s(2)U34. This is tRNA modification GTPase MnmE from Nitrosomonas europaea (strain ATCC 19718 / CIP 103999 / KCTC 2705 / NBRC 14298).